Consider the following 130-residue polypeptide: Small ribosomal subunit protein uS9 (130 aa).

Belongs to the universal ribosomal protein uS9 family.

This Pseudomonas putida (strain W619) protein is Small ribosomal subunit protein uS9.